The primary structure comprises 170 residues: Bifunctional protein PyrR (170 aa).

A PRPP-binding motif is present at residues 90–102 (LVLVDDVLMSGRT).

This sequence belongs to the purine/pyrimidine phosphoribosyltransferase family. PyrR subfamily.

It carries out the reaction UMP + diphosphate = 5-phospho-alpha-D-ribose 1-diphosphate + uracil. In terms of biological role, regulates the transcription of the pyrimidine nucleotide (pyr) operon in response to exogenous pyrimidines. Its function is as follows. Also displays a weak uracil phosphoribosyltransferase activity which is not physiologically significant. The polypeptide is Bifunctional protein PyrR (Pseudomonas aeruginosa (strain LESB58)).